Reading from the N-terminus, the 129-residue chain is Small ribosomal subunit protein uS8c (129 aa).

This sequence belongs to the universal ribosomal protein uS8 family. In terms of assembly, part of the 30S ribosomal subunit.

Its subcellular location is the plastid. The protein resides in the chloroplast. Functionally, one of the primary rRNA binding proteins, it binds directly to 16S rRNA central domain where it helps coordinate assembly of the platform of the 30S subunit. In Nephroselmis olivacea (Green alga), this protein is Small ribosomal subunit protein uS8c (rps8).